A 525-amino-acid polypeptide reads, in one-letter code: Tigger transposable element-derived protein 2 (525 aa).

One can recognise an HTH psq-type domain in the interval 1–52 (MLGKRKRVVLTIKDKLDIIKKLEEGISFKKLSVVYGIGESTVRDIKKNKERI). 2 DNA-binding regions (H-T-H motif) span residues 28–48 (FKKL…IKKN) and 100–132 (TICA…FKQR). The HTH CENPB-type domain occupies 67–139 (KRKSMKSSTY…KQRHGIPKAA (73 aa)). The DDE-1 domain occupies 168-385 (LQPEQIYGAD…VKSSTITKAW (218 aa)). The disordered stretch occupies residues 442-474 (QVLTDSESAEDQTKAAEQKPSSKSRKTELNPEK).

The protein belongs to the tigger transposable element derived protein family.

The protein resides in the nucleus. This chain is Tigger transposable element-derived protein 2 (TIGD2), found in Homo sapiens (Human).